Here is a 623-residue protein sequence, read N- to C-terminus: MSGIFRFSGDEDCLLGGSMYLSPGSCPGVYYPARKRLRVAATSFYSGFEEKQTSIDVLPEECLFEILRRLPSGQERSACACVSKHWLNLLSSISRSEVNESSVQDVEEGEGFLSRSLEGKKATDLRLAAIAVGTSSRGGLGKLQIRGSGFESKVTDVGLGAVAHGCPSLRIVSLWNLPAVSDLGLSEIARSCPMIEKLDLSRCPGITDSGLVAIAENCVNLSDLTIDSCSGVGNEGLRAIARRCVNLRSISIRSCPRIGDQGVAFLLAQAGSYLTKVKLQMLNVSGLSLAVIGHYGAAVTDLVLHGLQGVNEKGFWVMGNAKGLKKLKSLSVMSCRGMTDVGLEAVGNGCPDLKHVSLNKCLLVSGKGLVALAKSALSLESLKLEECHRINQFGLMGFLMNCGSKLKAFSLANCLGISDFNSESSLPSPSCSSLRSLSIRCCPGFGDASLAFLGKFCHQLQDVELCGLNGVTDAGVRELLQSNNVGLVKVNLSECINVSDNTVSAISVCHGRTLESLNLDGCKNITNASLVAVAKNCYSVNDLDISNTLVSDHGIKALASSPNHLNLQVLSIGGCSSITDKSKACIQKLGRTLLGLNIQRCGRISSSTVDTLLENLWRCDILY.

One can recognise an F-box domain in the interval 52–106 (QTSIDVLPEECLFEILRRLPSGQERSACACVSKHWLNLLSSISRSEVNESSVQDV). 18 LRR repeats span residues 119–147 (GKKA…QIRG), 151–176 (ESKV…SLWN), 177–202 (LPAV…DLSR), 203–228 (CPGI…TIDS), 229–254 (CSGV…SIRS), 255–281 (CPRI…KLQM), 307–334 (LQGV…SVMS), 335–360 (CRGM…SLNK), 361–386 (CLLV…KLEE), 387–413 (CHRI…SLAN), 414–441 (CLGI…SIRC), 442–467 (CPGF…ELCG), 468–494 (LNGV…NLSE), 495–521 (CINV…NLDG), 522–547 (CKNI…DISN), 548–574 (TLVS…SIGG), 575–600 (CSSI…NIQR), and 601–623 (CGRI…DILY).

Part of a SCF (SKP1-cullin-F-box) protein ligase complex. Interacts with CUL1, SKP1A/ASK1, SKP1B/ASK2, EIN3, and EIL1. As to expression, ubiquitous.

It localises to the nucleus. The protein operates within protein modification; protein ubiquitination. Component of SCF(EBF1) E3 ubiquitin ligase complexes, which may mediate the ubiquitination and subsequent proteasomal degradation of target proteins (probably including EIN3 and EIL1). Regulator of the ethylene signaling cascade by modulating the stability of EIN3 and EIL1 proteins. The polypeptide is EIN3-binding F-box protein 2 (EBF2) (Arabidopsis thaliana (Mouse-ear cress)).